The primary structure comprises 633 residues: Chaperone protein HtpG (633 aa).

Residues 1 to 341 (MTAPHETMSF…SADLPLNVSR (341 aa)) are a; substrate-binding. Residues 342-562 (ELLQESRDVK…DGDMSGYLQR (221 aa)) are b. A c region spans residues 563–633 (LLKQAGQKAP…YVQRVNRLLA (71 aa)).

Belongs to the heat shock protein 90 family. In terms of assembly, homodimer.

The protein resides in the cytoplasm. In terms of biological role, molecular chaperone. Has ATPase activity. This is Chaperone protein HtpG from Cupriavidus metallidurans (strain ATCC 43123 / DSM 2839 / NBRC 102507 / CH34) (Ralstonia metallidurans).